A 217-amino-acid chain; its full sequence is Imidazole glycerol phosphate synthase subunit HisH (217 aa).

One can recognise a Glutamine amidotransferase type-1 domain in the interval 5 to 217 (RVGIINYGVG…LRLLANFLTL (213 aa)). The Nucleophile role is filled by C93. Active-site residues include H199 and E201.

Heterodimer of HisH and HisF.

The protein resides in the cytoplasm. It carries out the reaction 5-[(5-phospho-1-deoxy-D-ribulos-1-ylimino)methylamino]-1-(5-phospho-beta-D-ribosyl)imidazole-4-carboxamide + L-glutamine = D-erythro-1-(imidazol-4-yl)glycerol 3-phosphate + 5-amino-1-(5-phospho-beta-D-ribosyl)imidazole-4-carboxamide + L-glutamate + H(+). The enzyme catalyses L-glutamine + H2O = L-glutamate + NH4(+). It functions in the pathway amino-acid biosynthesis; L-histidine biosynthesis; L-histidine from 5-phospho-alpha-D-ribose 1-diphosphate: step 5/9. Its function is as follows. IGPS catalyzes the conversion of PRFAR and glutamine to IGP, AICAR and glutamate. The HisH subunit catalyzes the hydrolysis of glutamine to glutamate and ammonia as part of the synthesis of IGP and AICAR. The resulting ammonia molecule is channeled to the active site of HisF. This is Imidazole glycerol phosphate synthase subunit HisH from Helicobacter hepaticus (strain ATCC 51449 / 3B1).